The sequence spans 66 residues: UPF0337 protein BT9727_0908 (66 aa).

A disordered region spans residues 1–22; that stretch reads MSENGLKEQITGKVEKTKGQVK. Positions 13–22 are enriched in basic and acidic residues; it reads KVEKTKGQVK.

The protein belongs to the UPF0337 (CsbD) family.

This Bacillus thuringiensis subsp. konkukian (strain 97-27) protein is UPF0337 protein BT9727_0908.